A 607-amino-acid polypeptide reads, in one-letter code: Homologous recombination OB-fold protein (607 aa).

Disordered regions lie at residues 25–49 (LRPNSSRPQETPQAHSSKLSPSYPA), 84–108 (ISSSSSGSQQRMTGTKVSQESSGRQ), 196–308 (PWPS…TTVT), and 531–581 (LKPP…DDLD). Composition is skewed to polar residues over residues 27–49 (PNSSRPQETPQAHSSKLSPSYPA) and 92–108 (QQRMTGTKVSQESSGRQ). The residue at position 30 (serine 30) is a Phosphoserine. Arginine 281 carries the asymmetric dimethylarginine modification. The span at 295-308 (SPFSTPRSTSTTVT) shows a compositional bias: low complexity. The segment covering 570 to 581 (PEEELPEADDLD) has biased composition (acidic residues).

Interacts with MCM8; this interaction is necessary for MCM8-MCM9 helicase complex recruitment to DNA damage sites. Interacts with RPA1; this interaction associates HROB with the RPA complex.

The protein resides in the nucleus. It localises to the chromosome. Its function is as follows. DNA-binding protein involved in homologous recombination that acts by recruiting the MCM8-MCM9 helicase complex to sites of DNA damage to promote DNA repair synthesis. The protein is Homologous recombination OB-fold protein of Rattus norvegicus (Rat).